Here is a 112-residue protein sequence, read N- to C-terminus: MSDTLAQLADVLAARRHADPESSYVAKLHAKGLNKILEKVGEEATETLLAAKDAEHGDDATRQAVVAETADLWFHSLVMLSHLDIDHQAVLDELARRFGVSGLDEKAARQSR.

The protein belongs to the PRA-PH family.

The protein localises to the cytoplasm. It catalyses the reaction 1-(5-phospho-beta-D-ribosyl)-ATP + H2O = 1-(5-phospho-beta-D-ribosyl)-5'-AMP + diphosphate + H(+). It functions in the pathway amino-acid biosynthesis; L-histidine biosynthesis; L-histidine from 5-phospho-alpha-D-ribose 1-diphosphate: step 2/9. This chain is Phosphoribosyl-ATP pyrophosphatase, found in Chromohalobacter salexigens (strain ATCC BAA-138 / DSM 3043 / CIP 106854 / NCIMB 13768 / 1H11).